An 869-amino-acid polypeptide reads, in one-letter code: Valine--tRNA ligase (869 aa).

The 'HIGH' region motif lies at 51-61 (PNVTGNLHLGH). The 'KMSKS' region signature appears at 523–527 (KMSKS). K526 is a binding site for ATP. The stretch at 797–869 (EDLLGSNNEA…ELEKLLSSHK (73 aa)) forms a coiled coil.

The protein belongs to the class-I aminoacyl-tRNA synthetase family. ValS type 1 subfamily. In terms of assembly, monomer.

The protein resides in the cytoplasm. It carries out the reaction tRNA(Val) + L-valine + ATP = L-valyl-tRNA(Val) + AMP + diphosphate. Catalyzes the attachment of valine to tRNA(Val). As ValRS can inadvertently accommodate and process structurally similar amino acids such as threonine, to avoid such errors, it has a 'posttransfer' editing activity that hydrolyzes mischarged Thr-tRNA(Val) in a tRNA-dependent manner. The protein is Valine--tRNA ligase of Malacoplasma penetrans (strain HF-2) (Mycoplasma penetrans).